The chain runs to 88 residues: Putative membrane protein insertion efficiency factor (88 aa).

The tract at residues 68–88 (VPPPNSDTRARGEADARSHRL) is disordered. Positions 75–88 (TRARGEADARSHRL) are enriched in basic and acidic residues.

It belongs to the UPF0161 family.

The protein resides in the cell inner membrane. Functionally, could be involved in insertion of integral membrane proteins into the membrane. The protein is Putative membrane protein insertion efficiency factor of Burkholderia orbicola (strain MC0-3).